The following is a 571-amino-acid chain: Proline--tRNA ligase (571 aa).

It belongs to the class-II aminoacyl-tRNA synthetase family. ProS type 1 subfamily. As to quaternary structure, homodimer.

The protein localises to the cytoplasm. The enzyme catalyses tRNA(Pro) + L-proline + ATP = L-prolyl-tRNA(Pro) + AMP + diphosphate. Its function is as follows. Catalyzes the attachment of proline to tRNA(Pro) in a two-step reaction: proline is first activated by ATP to form Pro-AMP and then transferred to the acceptor end of tRNA(Pro). As ProRS can inadvertently accommodate and process non-cognate amino acids such as alanine and cysteine, to avoid such errors it has two additional distinct editing activities against alanine. One activity is designated as 'pretransfer' editing and involves the tRNA(Pro)-independent hydrolysis of activated Ala-AMP. The other activity is designated 'posttransfer' editing and involves deacylation of mischarged Ala-tRNA(Pro). The misacylated Cys-tRNA(Pro) is not edited by ProRS. In Vibrio atlanticus (strain LGP32) (Vibrio splendidus (strain Mel32)), this protein is Proline--tRNA ligase.